Consider the following 165-residue polypeptide: Large ribosomal subunit protein uL10 (165 aa).

Belongs to the universal ribosomal protein uL10 family. As to quaternary structure, part of the ribosomal stalk of the 50S ribosomal subunit. The N-terminus interacts with L11 and the large rRNA to form the base of the stalk. The C-terminus forms an elongated spine to which L12 dimers bind in a sequential fashion forming a multimeric L10(L12)X complex.

In terms of biological role, forms part of the ribosomal stalk, playing a central role in the interaction of the ribosome with GTP-bound translation factors. In Enterobacter sp. (strain 638), this protein is Large ribosomal subunit protein uL10.